A 156-amino-acid chain; its full sequence is U4/U6.U5 small nuclear ribonucleoprotein 27 kDa protein (156 aa).

A disordered region spans residues 1 to 98 (MGRSRSRSPE…IAAEDLEGKT (98 aa)). Positions 13–59 (RERRRSRSASRERERRRRERSRSRERRRSRSRSPHRRRSRSPRRHRS) are enriched in basic residues. Residues 66–98 (RLKDRRDDDKKDSKESKGAKERQIAAEDLEGKT) show a composition bias toward basic and acidic residues.

The protein belongs to the SNUT3 family. In terms of assembly, part of a tri-snRNP complex.

It is found in the nucleus. May play a role in mRNA splicing. The chain is U4/U6.U5 small nuclear ribonucleoprotein 27 kDa protein (snrnp27) from Xenopus tropicalis (Western clawed frog).